A 281-amino-acid polypeptide reads, in one-letter code: MSLSALENTINTAFDARDTISAATKGEVRDAVDQALDLLDRGEARVAERDASGTWTVNQWLKKAVLLSFRLNDMHTIAGGPGGATWWDKVPSKFEGWGESRFREAGFRAVPGAIVRRSAFIAKNAVLMPSFVNLGAYVDEATMVDTWSTVGSCAQIGKRVHISGGVGIGGVLEPLQAGPVIIEDDCFIGARSEVAEGVIVRRGAVLAMGVFLGASTKIVDRETGEVFIGEVPEYAVLVPGALPGKPLKNGTPGPSTACAVIVKRVDERTRSKTSINELLRD.

Substrate contacts are provided by R108 and D145.

This sequence belongs to the transferase hexapeptide repeat family. Homotrimer.

Its subcellular location is the cytoplasm. The enzyme catalyses (S)-2,3,4,5-tetrahydrodipicolinate + succinyl-CoA + H2O = (S)-2-succinylamino-6-oxoheptanedioate + CoA. It functions in the pathway amino-acid biosynthesis; L-lysine biosynthesis via DAP pathway; LL-2,6-diaminopimelate from (S)-tetrahydrodipicolinate (succinylase route): step 1/3. In Rhodopseudomonas palustris (strain BisB5), this protein is 2,3,4,5-tetrahydropyridine-2,6-dicarboxylate N-succinyltransferase.